Consider the following 95-residue polypeptide: Aspartyl/glutamyl-tRNA(Asn/Gln) amidotransferase subunit C (95 aa).

Belongs to the GatC family. Heterotrimer of A, B and C subunits.

The catalysed reaction is L-glutamyl-tRNA(Gln) + L-glutamine + ATP + H2O = L-glutaminyl-tRNA(Gln) + L-glutamate + ADP + phosphate + H(+). It carries out the reaction L-aspartyl-tRNA(Asn) + L-glutamine + ATP + H2O = L-asparaginyl-tRNA(Asn) + L-glutamate + ADP + phosphate + 2 H(+). Allows the formation of correctly charged Asn-tRNA(Asn) or Gln-tRNA(Gln) through the transamidation of misacylated Asp-tRNA(Asn) or Glu-tRNA(Gln) in organisms which lack either or both of asparaginyl-tRNA or glutaminyl-tRNA synthetases. The reaction takes place in the presence of glutamine and ATP through an activated phospho-Asp-tRNA(Asn) or phospho-Glu-tRNA(Gln). The protein is Aspartyl/glutamyl-tRNA(Asn/Gln) amidotransferase subunit C of Nitrosococcus oceani (strain ATCC 19707 / BCRC 17464 / JCM 30415 / NCIMB 11848 / C-107).